The following is a 468-amino-acid chain: Serine--tRNA ligase (468 aa).

Residue 272–274 coordinates L-serine; that stretch reads TAE. ATP is bound at residue 303-305; it reads RAE. Glutamate 326 contributes to the L-serine binding site. Residue 390–393 coordinates ATP; it reads EISS. Position 426 (serine 426) interacts with L-serine.

It belongs to the class-II aminoacyl-tRNA synthetase family. Type-1 seryl-tRNA synthetase subfamily. As to quaternary structure, homodimer. The tRNA molecule binds across the dimer.

The protein localises to the cytoplasm. The enzyme catalyses tRNA(Ser) + L-serine + ATP = L-seryl-tRNA(Ser) + AMP + diphosphate + H(+). It catalyses the reaction tRNA(Sec) + L-serine + ATP = L-seryl-tRNA(Sec) + AMP + diphosphate + H(+). It functions in the pathway aminoacyl-tRNA biosynthesis; selenocysteinyl-tRNA(Sec) biosynthesis; L-seryl-tRNA(Sec) from L-serine and tRNA(Sec): step 1/1. Catalyzes the attachment of serine to tRNA(Ser). Is also able to aminoacylate tRNA(Sec) with serine, to form the misacylated tRNA L-seryl-tRNA(Sec), which will be further converted into selenocysteinyl-tRNA(Sec). The polypeptide is Serine--tRNA ligase (Xanthobacter autotrophicus (strain ATCC BAA-1158 / Py2)).